We begin with the raw amino-acid sequence, 342 residues long: scyllo-inositol 2-dehydrogenase (NAD(+)) (342 aa).

Belongs to the Gfo/Idh/MocA family.

The enzyme catalyses scyllo-inositol + NAD(+) = scyllo-inosose + NADH + H(+). It participates in polyol metabolism. In terms of biological role, catalyzes the reversible NAD(+)-dependent oxidation of scyllo-inositol (SI) to 2,4,6/3,5-pentahydroxycyclohexanone (scyllo-inosose or SIS). Is required for SI catabolism that allows B.subtilis to utilize SI as the sole carbon source for growth. Cannot use NADP(+) instead of NAD(+). The chain is scyllo-inositol 2-dehydrogenase (NAD(+)) from Bacillus subtilis (strain 168).